Consider the following 153-residue polypeptide: Succinate dehydrogenase assembly factor 2, mitochondrial (153 aa).

Belongs to the SDHAF2 family. Interacts with the flavoprotein subunit within the SDH catalytic dimer.

Its subcellular location is the mitochondrion matrix. In terms of biological role, plays an essential role in the assembly of succinate dehydrogenase (SDH), an enzyme complex (also referred to as respiratory complex II) that is a component of both the tricarboxylic acid (TCA) cycle and the mitochondrial electron transport chain, and which couples the oxidation of succinate to fumarate with the reduction of ubiquinone (coenzyme Q) to ubiquinol. Required for flavinylation (covalent attachment of FAD) of the flavoprotein subunit of the SDH catalytic dimer. The sequence is that of Succinate dehydrogenase assembly factor 2, mitochondrial from Candida glabrata (strain ATCC 2001 / BCRC 20586 / JCM 3761 / NBRC 0622 / NRRL Y-65 / CBS 138) (Yeast).